The sequence spans 321 residues: ATP-dependent 6-phosphofructokinase (321 aa).

Gly-12 provides a ligand contact to ATP. ADP is bound by residues 22 to 26 and 55 to 60; these read RGVVR and RYSVSD. Residues 73–74 and 103–106 each bind ATP; these read RF and GDGS. Residue Asp-104 coordinates Mg(2+). 127-129 contributes to the substrate binding site; it reads TID. Asp-129 serves as the catalytic Proton acceptor. Arg-156 provides a ligand contact to ADP. Residues Arg-164 and 171 to 173 contribute to the substrate site; that span reads MGR. ADP is bound by residues 187–189, Lys-213, and 215–217; these read GCE and KRH. Residues Glu-224, Arg-245, and 251–254 each bind substrate; that span reads HIQR.

Belongs to the phosphofructokinase type A (PFKA) family. ATP-dependent PFK group I subfamily. Prokaryotic clade 'B1' sub-subfamily. Homotetramer. The cofactor is Mg(2+).

Its subcellular location is the cytoplasm. The catalysed reaction is beta-D-fructose 6-phosphate + ATP = beta-D-fructose 1,6-bisphosphate + ADP + H(+). Its pathway is carbohydrate degradation; glycolysis; D-glyceraldehyde 3-phosphate and glycerone phosphate from D-glucose: step 3/4. Its activity is regulated as follows. Allosterically activated by ADP and other diphosphonucleosides, and allosterically inhibited by phosphoenolpyruvate. In terms of biological role, catalyzes the phosphorylation of D-fructose 6-phosphate to fructose 1,6-bisphosphate by ATP, the first committing step of glycolysis. The chain is ATP-dependent 6-phosphofructokinase from Histophilus somni (strain 129Pt) (Haemophilus somnus).